The sequence spans 413 residues: Hemocyanin type 2 unit e (413 aa).

The N-linked (GlcNAc...) (high mannose) asparagine glycan is linked to N17. Position 49 (H49) interacts with Cu cation. C55 and C66 are disulfide-bonded. A cross-link (2'-(S-cysteinyl)-histidine (Cys-His)) is located at residues 67–69 (CVH). Residues H69 and H78 each coordinate Cu cation. N127 carries N-linked (GlcNAc...) (high mannose) asparagine glycosylation. 2 disulfides stabilise this stretch: C179/C246 and C336/C342. The Cu cation site is built by H189, H193, and H220.

The protein belongs to the tyrosinase family. Hemocyanin subfamily. In terms of assembly, decamers of large identical subunits, each containing 8 globular oxygen-binding functional units. Requires Cu(2+) as cofactor. In terms of tissue distribution, hemolymph.

It is found in the secreted. The protein localises to the extracellular space. In terms of biological role, hemocyanins are copper-containing oxygen carriers occurring freely dissolved in the hemolymph of many mollusks and arthropods. The sequence is that of Hemocyanin type 2 unit e from Rapana venosa (Veined rapa whelk).